The chain runs to 340 residues: Ketol-acid reductoisomerase (NADP(+)) (340 aa).

A KARI N-terminal Rossmann domain is found at methionine 1–threonine 182. NADP(+) contacts are provided by residues tyrosine 24 to glutamine 27, arginine 48, serine 51, serine 53, and aspartate 83 to glutamine 86. Histidine 108 is a catalytic residue. Residue glycine 134 participates in NADP(+) binding. In terms of domain architecture, KARI C-terminal knotted spans asparagine 183–isoleucine 329. Mg(2+) is bound by residues aspartate 191, glutamate 195, glutamate 227, and glutamate 231. Serine 252 is a substrate binding site.

Belongs to the ketol-acid reductoisomerase family. Mg(2+) is required as a cofactor.

The catalysed reaction is (2R)-2,3-dihydroxy-3-methylbutanoate + NADP(+) = (2S)-2-acetolactate + NADPH + H(+). The enzyme catalyses (2R,3R)-2,3-dihydroxy-3-methylpentanoate + NADP(+) = (S)-2-ethyl-2-hydroxy-3-oxobutanoate + NADPH + H(+). It functions in the pathway amino-acid biosynthesis; L-isoleucine biosynthesis; L-isoleucine from 2-oxobutanoate: step 2/4. Its pathway is amino-acid biosynthesis; L-valine biosynthesis; L-valine from pyruvate: step 2/4. Functionally, involved in the biosynthesis of branched-chain amino acids (BCAA). Catalyzes an alkyl-migration followed by a ketol-acid reduction of (S)-2-acetolactate (S2AL) to yield (R)-2,3-dihydroxy-isovalerate. In the isomerase reaction, S2AL is rearranged via a Mg-dependent methyl migration to produce 3-hydroxy-3-methyl-2-ketobutyrate (HMKB). In the reductase reaction, this 2-ketoacid undergoes a metal-dependent reduction by NADPH to yield (R)-2,3-dihydroxy-isovalerate. This Cereibacter sphaeroides (strain ATCC 17029 / ATH 2.4.9) (Rhodobacter sphaeroides) protein is Ketol-acid reductoisomerase (NADP(+)).